The primary structure comprises 351 residues: Rhodopsin (351 aa).

The Extracellular segment spans residues 1–36 (MNGTEGPFFYIPMVNTTGIVRSPYEYPQYYLVNPAA). N-linked (GlcNAc...) asparagine glycosylation is found at Asn-2 and Asn-15. A helical membrane pass occupies residues 37–61 (YAILGAYMFFLIIVGFPVNFMTLYV). At 62–73 (TLEHKKLRTPLN) the chain is on the cytoplasmic side. A helical membrane pass occupies residues 74–96 (YILLNLAVADLFMVIGGFTTTMY). Residues 97-110 (TSMHGYFVLGRLGC) are Extracellular-facing. Residues Cys-110 and Cys-187 are joined by a disulfide bond. A helical membrane pass occupies residues 111–133 (NLEGFFATLGGMISLWSLAVLAI). Residues 134–136 (ERW) carry the 'Ionic lock' involved in activated form stabilization motif. Residues 134–152 (ERWVVVCKPISNFRFGENH) are Cytoplasmic-facing. Residues 153 to 173 (AIMGVSLTWGMALACTVPPLV) traverse the membrane as a helical segment. Residues 174–202 (GWSRYIPEGMQCSCGIDYYTRAEGFNNES) lie on the Extracellular side of the membrane. N-linked (GlcNAc...) asparagine glycosylation occurs at Asn-200. Residues 203 to 224 (FVLYMFFCHFTIPLTIIFFCYG) form a helical membrane-spanning segment. Residues 225–252 (RLLCAVKEAAAAQQESETTQRAEREVTR) are Cytoplasmic-facing. The chain crosses the membrane as a helical span at residues 253-274 (MVIIMVIGFLVCWLPYASVAWF). At 275–286 (IFTHQGSEFGPL) the chain is on the extracellular side. A helical membrane pass occupies residues 287–308 (FMTIPAFFAKSSSIYNPMIYIC). N6-(retinylidene)lysine is present on Lys-296. Topologically, residues 309–351 (MNKQFRHCMITTLFCGKNPFEGEEEGASSTKTEASSASSVSPA) are cytoplasmic. Cys-323 is lipidated: S-palmitoyl cysteine. Residues 330 to 351 (GEEEGASSTKTEASSASSVSPA) form a disordered region. Low complexity predominate over residues 335-351 (ASSTKTEASSASSVSPA).

Belongs to the G-protein coupled receptor 1 family. Opsin subfamily. Post-translationally, phosphorylated on some or all of the serine and threonine residues present in the C-terminal region. In terms of processing, contains one covalently linked retinal chromophore.

The protein localises to the membrane. It is found in the cell projection. Its subcellular location is the cilium. The protein resides in the photoreceptor outer segment. Photoreceptor required for image-forming vision at low light intensity. While most salt water fish species use retinal as chromophore, most freshwater fish use 3-dehydroretinal, or a mixture of retinal and 3-dehydroretinal. Light-induced isomerization of 11-cis to all-trans retinal triggers a conformational change that activates signaling via G-proteins. Subsequent receptor phosphorylation mediates displacement of the bound G-protein alpha subunit by arrestin and terminates signaling. This chain is Rhodopsin (rho), found in Sargocentron diadema (Crown squirrelfish).